The chain runs to 671 residues: UvrABC system protein B (671 aa).

Residues 25–412 form the Helicase ATP-binding domain; the sequence is EGIDAGLAHQ…AGRIVEQVVR (388 aa). 38-45 is a binding site for ATP; it reads GVTGSGKT. The short motif at 91-114 is the Beta-hairpin element; that stretch reads YYDYYQPEAYVPSSDTFIEKDASI. One can recognise a Helicase C-terminal domain in the interval 429–582; it reads QVDDLLSEIH…QIAFNLEHGI (154 aa). The interval 601 to 624 is disordered; the sequence is PGSRSKKRKGMAKAAEENARYENE. Over residues 614–624 the composition is skewed to basic and acidic residues; that stretch reads AAEENARYENE. The UVR domain maps to 632–667; sequence NKRIRQLEEKMYQLARDLEFEAAAQMRDEIGKLRER.

It belongs to the UvrB family. As to quaternary structure, forms a heterotetramer with UvrA during the search for lesions. Interacts with UvrC in an incision complex.

Its subcellular location is the cytoplasm. Its function is as follows. The UvrABC repair system catalyzes the recognition and processing of DNA lesions. A damage recognition complex composed of 2 UvrA and 2 UvrB subunits scans DNA for abnormalities. Upon binding of the UvrA(2)B(2) complex to a putative damaged site, the DNA wraps around one UvrB monomer. DNA wrap is dependent on ATP binding by UvrB and probably causes local melting of the DNA helix, facilitating insertion of UvrB beta-hairpin between the DNA strands. Then UvrB probes one DNA strand for the presence of a lesion. If a lesion is found the UvrA subunits dissociate and the UvrB-DNA preincision complex is formed. This complex is subsequently bound by UvrC and the second UvrB is released. If no lesion is found, the DNA wraps around the other UvrB subunit that will check the other stand for damage. The protein is UvrABC system protein B of Pseudomonas syringae pv. syringae (strain B728a).